A 115-amino-acid chain; its full sequence is Large ribosomal subunit protein bL19 (115 aa).

The protein belongs to the bacterial ribosomal protein bL19 family.

This protein is located at the 30S-50S ribosomal subunit interface and may play a role in the structure and function of the aminoacyl-tRNA binding site. This Lachnospira eligens (strain ATCC 27750 / DSM 3376 / VPI C15-48 / C15-B4) (Eubacterium eligens) protein is Large ribosomal subunit protein bL19.